A 277-amino-acid polypeptide reads, in one-letter code: Small ribosomal subunit protein uS3 (277 aa).

Residues 43–111 enclose the KH type-2 domain; the sequence is IRKVMNKDLE…QVQLNIFEVK (69 aa). The tract at residues 216–277 is disordered; it reads FEEQQAQQGN…EAAVEPETKE (62 aa). Residues 264–277 are compositionally biased toward basic and acidic residues; sequence EVSKEAAVEPETKE.

The protein belongs to the universal ribosomal protein uS3 family. As to quaternary structure, part of the 30S ribosomal subunit. Forms a tight complex with proteins S10 and S14.

In terms of biological role, binds the lower part of the 30S subunit head. Binds mRNA in the 70S ribosome, positioning it for translation. The sequence is that of Small ribosomal subunit protein uS3 from Bifidobacterium animalis subsp. lactis (strain AD011).